A 95-amino-acid polypeptide reads, in one-letter code: Small ribosomal subunit protein uS17 (95 aa).

Belongs to the universal ribosomal protein uS17 family. As to quaternary structure, part of the 30S ribosomal subunit.

Functionally, one of the primary rRNA binding proteins, it binds specifically to the 5'-end of 16S ribosomal RNA. In Phytoplasma australiense, this protein is Small ribosomal subunit protein uS17.